Reading from the N-terminus, the 2168-residue chain is Bromodomain adjacent to zinc finger domain protein 2B (2168 aa).

8 disordered regions span residues 1–29, 140–348, 409–428, 459–479, 528–698, 719–740, 841–872, and 1021–1043; these read MESGERLPSSAASSTTPTSSSTPSVASVV, FAPP…KQPQ, LKAGNKNTSEESSLLTSELR, SNPKATSSSPAHPKQTLENNH, STPF…LHIA, GTSSSTLTSSPHSGTSKRRRVT, MEGRRGRPPNPDRQRAREESRMRRRKGRPPNV, and RKKAEEKERLKQEKRDEKRLNKE. Residues 8-29 show a composition bias toward low complexity; that stretch reads PSSAASSTTPTSSSTPSVASVV. Polar residues-rich tracts occupy residues 146-163 and 171-193; these read NHDSSSFHSRTSGKSNRN and GSINGSNTSSVIGINTSVLSTTA. Composition is skewed to low complexity over residues 194 to 204 and 240 to 263; these read SSSMGQTKSTS and ESSSNSDSDSGTSSDTSSEGISSS. Acidic residues predominate over residues 264 to 291; it reads DSDDLEEDEEEEDQSIEESEDDDSDSES. The span at 307-325 shows a compositional bias: basic and acidic residues; sequence SDPKADGQKATEKAQEKRI. A compositionally biased stretch (low complexity) spans 335–348; sequence SQTHSFQSQQKQPQ. Composition is skewed to polar residues over residues 461–479 and 528–551; these read PKATSSSPAHPKQTLENNH and STPFSSPVNLSTSGRRTPGNQTPV. The segment covering 592 to 605 has biased composition (basic and acidic residues); it reads RGTDSDIPSSKDSE. Residues 606 to 663 show a composition bias toward acidic residues; it reads DSNEDEEEDDEEEDEEDDEDDESDDSQSESDSNSESDTEGSEEEDDDDKDQDESDSDT. Positions 670 to 693 are enriched in polar residues; it reads MKLNKTTSSVKSPSMSLTGHSTPR. Over residues 720–732 the composition is skewed to low complexity; the sequence is TSSSTLTSSPHSG. Residues 739–810 form the MBD domain; that stretch reads VTDERELRIP…DNFSFSAKIR (72 aa). The segment covering 841-861 has biased composition (basic and acidic residues); the sequence is MEGRRGRPPNPDRQRAREESR. Residues 883–1061 are a coiled coil; that stretch reads AKLLRKLQAQ…ELEMAKELKK (179 aa). Residues 1087 to 1152 enclose the DDT domain; it reads GSTFSDCLMV…LSAAVCDPGL (66 aa). Residues 1265–1341 form a disordered region; the sequence is KRDTSGGIDL…CEDEDEGDQA (77 aa). Acidic residues predominate over residues 1297-1321; that stretch reads SDYDDDDDDDSDDQGDEDDEDEEDK. Basic and acidic residues predominate over residues 1322-1331; the sequence is EDKKGKKTDI. Residues 1334–1375 adopt a coiled-coil conformation; that stretch reads DEDEGDQAASVEELEKQIEKLSKQQSQYRRKLFDASHSLRSV. A Glycyl lysine isopeptide (Lys-Gly) (interchain with G-Cter in SUMO2) cross-link involves residue Lys1425. Position 1462 is an N6-acetyllysine (Lys1462). 2 positions are modified to phosphoserine: Ser1465 and Ser1467. The segment covering 1503-1533 has biased composition (polar residues); it reads SGKHSLGSVQSTATQSNVEKADSNNLFNTGS. 3 disordered regions span residues 1503-1542, 1582-1607, and 1670-1694; these read SGKHSLGSVQSTATQSNVEKADSNNLFNTGSSGPGKFYSP, SLVTPQSQPPSKSPSPTPAPLGSSAQ, and TSNVASSKSESPVPQNEKATSAQPA. Pro residues predominate over residues 1588 to 1600; it reads SQPPSKSPSPTPA. Positions 1670–1692 are enriched in polar residues; it reads TSNVASSKSESPVPQNEKATSAQ. Phosphoserine is present on Ser1680. A PHD-type zinc finger spans residues 1931-1981; sequence KVYCQICRKGDNEELLLLCDGCDKGCHTYCHRPKITTIPDGDWFCPACIAK. The interval 1998–2040 is disordered; that stretch reads KTNESKKGKKVTLTGDTEDEDSASTSSSLKRGNKDLKKRKMEE. A Phosphothreonine modification is found at Thr2014. The residue at position 2019 (Ser2019) is a Phosphoserine. Positions 2029-2040 are enriched in basic and acidic residues; sequence GNKDLKKRKMEE. The 105-residue stretch at 2060 to 2164 folds into the Bromo domain; it reads RDDSKDLALC…KYFEKKWTDT (105 aa).

The protein belongs to the WAL family. In terms of assembly, component of the BRF-1 ISWI chromatin remodeling complex, at least composed of SMARCA1 and BAZ2B, which regulates the spacing of histone octamers on the DNA template to facilitate access to DNA. Within the BRF-1 ISWI chromatin remodeling complex interacts with SMARCA1; the interaction is direct. Component of the BRF-5 ISWI chromatin remodeling complex, at least composed of SMARCA5/SNF2H and BAZ2B, which regulates the spacing of histone octamers on the DNA template to facilitate access to DNA. Within the BRF-5 ISWI chromatin remodeling complex interacts with SMARCA5/SNF2H; the interaction is direct. Interacts with acetylated lysine residues on histone H1.4, H2A, H2B, H3 and H4 (in vitro). Interacts with EHMT1. Expressed at varying levels in several tissues, whereas a smaller transcript was expressed specifically in testis.

The protein resides in the nucleus. Functionally, regulatory subunit of the ATP-dependent BRF-1 and BRF-5 ISWI chromatin remodeling complexes, which form ordered nucleosome arrays on chromatin and facilitate access to DNA during DNA-templated processes such as DNA replication, transcription, and repair. Both complexes regulate the spacing of nucleosomes along the chromatin and have the ability to slide mononucleosomes to the center of a DNA template. The BRF-1 ISWI chromatin remodeling complex has a lower ATP hydrolysis rate than the BRF-5 ISWI chromatin remodeling complex. Chromatin reader protein, which may play a role in transcriptional regulation via interaction with ISWI. Involved in positively modulating the rate of age-related behavioral deterioration. Represses the expression of mitochondrial function-related genes, perhaps by occupying their promoter regions, working in concert with histone methyltransferase EHMT1. The chain is Bromodomain adjacent to zinc finger domain protein 2B (BAZ2B) from Homo sapiens (Human).